Reading from the N-terminus, the 92-residue chain is Protein OP-ORF (92 aa).

Residues 53 to 82 adopt a coiled-coil conformation; the sequence is KMLAATISILEEEVTELVTELNNTTNLTAK.

The protein is Protein OP-ORF of Rice dwarf virus (isolate Fujian) (RDV).